A 453-amino-acid polypeptide reads, in one-letter code: Tubulin alpha-2 chain (453 aa).

Position 11 (Gln-11) interacts with GTP. Lys-40 carries the N6-acetyllysine modification. Positions 71, 144, 145, 179, 206, and 228 each coordinate GTP. Glu-71 contributes to the Mg(2+) binding site. The active site involves Glu-254. The segment at 432-453 (YEEVGAETAEGEGEEEDFGEEY) is disordered.

Belongs to the tubulin family. As to quaternary structure, dimer of alpha and beta chains. A typical microtubule is a hollow water-filled tube with an outer diameter of 25 nm and an inner diameter of 15 nM. Alpha-beta heterodimers associate head-to-tail to form protofilaments running lengthwise along the microtubule wall with the beta-tubulin subunit facing the microtubule plus end conferring a structural polarity. Microtubules usually have 13 protofilaments but different protofilament numbers can be found in some organisms and specialized cells. It depends on Mg(2+) as a cofactor. Undergoes a tyrosination/detyrosination cycle, the cyclic removal and re-addition of a C-terminal tyrosine residue by the enzymes tubulin tyrosine carboxypeptidase (TTCP) and tubulin tyrosine ligase (TTL), respectively. Post-translationally, acetylation of alpha chains at Lys-40 stabilizes microtubules and affects affinity and processivity of microtubule motors. This modification has a role in multiple cellular functions, ranging from cell motility, cell cycle progression or cell differentiation to intracellular trafficking and signaling.

It is found in the cytoplasm. Its subcellular location is the cytoskeleton. It carries out the reaction GTP + H2O = GDP + phosphate + H(+). Functionally, tubulin is the major constituent of microtubules, a cylinder consisting of laterally associated linear protofilaments composed of alpha- and beta-tubulin heterodimers. Microtubules grow by the addition of GTP-tubulin dimers to the microtubule end, where a stabilizing cap forms. Below the cap, tubulin dimers are in GDP-bound state, owing to GTPase activity of alpha-tubulin. The polypeptide is Tubulin alpha-2 chain (TUBA2) (Pelvetia fastigiata (Brown alga)).